A 429-amino-acid chain; its full sequence is Adenylosuccinate synthetase (429 aa).

GTP-binding positions include 12–18 (GDEGKGK) and 40–42 (GHT). D13 (proton acceptor) is an active-site residue. D13 and G40 together coordinate Mg(2+). IMP-binding positions include 13–16 (DEGK), 38–41 (NAGH), T128, R142, Q223, T238, and R302. Residue H41 is the Proton donor of the active site. 298-304 (VNTGRPR) lines the substrate pocket. GTP contacts are provided by residues R304, 330–332 (KLD), and 412–414 (GVG).

This sequence belongs to the adenylosuccinate synthetase family. In terms of assembly, homodimer. The cofactor is Mg(2+).

It is found in the cytoplasm. The enzyme catalyses IMP + L-aspartate + GTP = N(6)-(1,2-dicarboxyethyl)-AMP + GDP + phosphate + 2 H(+). The protein operates within purine metabolism; AMP biosynthesis via de novo pathway; AMP from IMP: step 1/2. Functionally, plays an important role in the de novo pathway of purine nucleotide biosynthesis. Catalyzes the first committed step in the biosynthesis of AMP from IMP. This Renibacterium salmoninarum (strain ATCC 33209 / DSM 20767 / JCM 11484 / NBRC 15589 / NCIMB 2235) protein is Adenylosuccinate synthetase.